A 459-amino-acid chain; its full sequence is uncharacterized protein (459 aa).

Positions 5–63 constitute a TRAM domain; the sequence is PVEEGQKFPLTIRRMGINGEGIGYFKKAVVFVPGAITGEEVVVEAVKVRDRFTEAKLNK. Residues C76, C82, C85, and C166 each contribute to the [4Fe-4S] cluster site. S-adenosyl-L-methionine contacts are provided by Q290, Y319, D340, and D388. C415 (nucleophile) is an active-site residue.

It belongs to the class I-like SAM-binding methyltransferase superfamily. RNA M5U methyltransferase family.

This is an uncharacterized protein from Listeria monocytogenes serovar 1/2a (strain ATCC BAA-679 / EGD-e).